We begin with the raw amino-acid sequence, 432 residues long: Lysosomal acid phosphatase (432 aa).

Positions 1–32 are cleaved as a signal peptide; that stretch reads MADGSCLGSGPQLGLIALLVVLLFSAVPLAQS. Over 33–384 the chain is Lumenal; the sequence is RELRFVTLVY…TTSFIMTEET (352 aa). His-44 acts as the Nucleophile in catalysis. N-linked (GlcNAc...) asparagine glycosylation is found at Asn-94, Asn-135, Asn-179, Asn-193, and Asn-269. Cystine bridges form between Cys-161-Cys-373, Cys-214-Cys-313, and Cys-348-Cys-352. Asp-290 functions as the Proton donor in the catalytic mechanism. Residues Asn-325 and Asn-334 are each glycosylated (N-linked (GlcNAc...) asparagine). Residues 385–405 traverse the membrane as a helical segment; it reads IIGLTIGAIALFIIIVVLMLL. The Cytoplasmic segment spans residues 406-432; it reads SCNEPKDDGYQHVSDEGDDHETKGLAM.

Belongs to the histidine acid phosphatase family. Post-translationally, the membrane-bound form is converted to the soluble form by sequential proteolytic processing. First, the C-terminal cytoplasmic tail is removed. Cleavage by a lysosomal protease releases the soluble form in the lysosome lumen.

The protein resides in the lysosome membrane. It localises to the lysosome lumen. The catalysed reaction is a phosphate monoester + H2O = an alcohol + phosphate. The protein is Lysosomal acid phosphatase (acp2) of Xenopus laevis (African clawed frog).